The chain runs to 198 residues: Putative NADH dehydrogenase/NAD(P)H nitroreductase XOO4267 (198 aa).

It belongs to the nitroreductase family. HadB/RutE subfamily. It depends on FMN as a cofactor.

This chain is Putative NADH dehydrogenase/NAD(P)H nitroreductase XOO4267, found in Xanthomonas oryzae pv. oryzae (strain KACC10331 / KXO85).